Here is a 432-residue protein sequence, read N- to C-terminus: Serine/threonine-protein phosphatase 2A activator 1 (432 aa).

The protein belongs to the PTPA-type PPIase family.

It is found in the cytoplasm. The protein resides in the nucleus. The catalysed reaction is [protein]-peptidylproline (omega=180) = [protein]-peptidylproline (omega=0). PPIases accelerate the folding of proteins. It catalyzes the cis-trans isomerization of proline imidic peptide bonds in oligopeptides. Acts as a regulatory subunit for PP2A-like phosphatases modulating their activity or substrate specificity, probably by inducing a conformational change in the catalytic subunit, a direct target of the PPIase. Can reactivate inactive phosphatase PP2A-phosphatase methylesterase complexes (PP2Ai) in presence of ATP and Mg(2+) by dissociating the inactive form from the complex. This chain is Serine/threonine-protein phosphatase 2A activator 1 (rrd1), found in Emericella nidulans (strain FGSC A4 / ATCC 38163 / CBS 112.46 / NRRL 194 / M139) (Aspergillus nidulans).